The primary structure comprises 347 residues: UDP-N-acetylenolpyruvoylglucosamine reductase (347 aa).

The 171-residue stretch at isoleucine 17 to alanine 187 folds into the FAD-binding PCMH-type domain. Residue arginine 163 is part of the active site. Catalysis depends on serine 232, which acts as the Proton donor. The active site involves glutamate 327.

This sequence belongs to the MurB family. Requires FAD as cofactor.

The protein resides in the cytoplasm. It catalyses the reaction UDP-N-acetyl-alpha-D-muramate + NADP(+) = UDP-N-acetyl-3-O-(1-carboxyvinyl)-alpha-D-glucosamine + NADPH + H(+). The protein operates within cell wall biogenesis; peptidoglycan biosynthesis. Its function is as follows. Cell wall formation. In Vibrio cholerae serotype O1 (strain ATCC 39315 / El Tor Inaba N16961), this protein is UDP-N-acetylenolpyruvoylglucosamine reductase.